A 191-amino-acid chain; its full sequence is Probable calcium-binding protein CML8 (191 aa).

The tract at residues 1 to 41 (MASKYRGYYHDEASSAAGGGGGGGGGDGYRREKQVRKKRLT) is disordered. Positions 17–27 (AGGGGGGGGGD) are enriched in gly residues. EF-hand domains are found at residues 43–78 (QKRK…LGFE), 79–114 (MTPE…KMGE), 116–151 (DARE…TGEP), and 152–187 (FTLD…IGFG). Asp56, Asp58, Ser60, Thr62, Glu67, Asp92, Asp94, Ser96, Thr98, Glu103, Asp129, Asp131, Asn133, Lys135, Asp140, Asp165, Asn167, Asp169, Glu171, and Glu176 together coordinate Ca(2+).

Potential calcium sensor. This chain is Probable calcium-binding protein CML8 (CML8), found in Oryza sativa subsp. japonica (Rice).